Consider the following 292-residue polypeptide: Ribosomal protein L11 methyltransferase (292 aa).

S-adenosyl-L-methionine-binding residues include threonine 144, glycine 165, aspartate 187, and asparagine 229.

The protein belongs to the methyltransferase superfamily. PrmA family.

The protein localises to the cytoplasm. The catalysed reaction is L-lysyl-[protein] + 3 S-adenosyl-L-methionine = N(6),N(6),N(6)-trimethyl-L-lysyl-[protein] + 3 S-adenosyl-L-homocysteine + 3 H(+). Its function is as follows. Methylates ribosomal protein L11. In Pseudomonas putida (strain GB-1), this protein is Ribosomal protein L11 methyltransferase.